Consider the following 417-residue polypeptide: Serine--tRNA ligase (417 aa).

Residue 232-234 (TAE) coordinates L-serine. ATP-binding positions include 263–265 (RRE) and V279. E286 contacts L-serine. Residue 350–353 (EISS) coordinates ATP. S385 is an L-serine binding site.

It belongs to the class-II aminoacyl-tRNA synthetase family. Type-1 seryl-tRNA synthetase subfamily. In terms of assembly, homodimer. The tRNA molecule binds across the dimer.

It localises to the cytoplasm. It carries out the reaction tRNA(Ser) + L-serine + ATP = L-seryl-tRNA(Ser) + AMP + diphosphate + H(+). It catalyses the reaction tRNA(Sec) + L-serine + ATP = L-seryl-tRNA(Sec) + AMP + diphosphate + H(+). It participates in aminoacyl-tRNA biosynthesis; selenocysteinyl-tRNA(Sec) biosynthesis; L-seryl-tRNA(Sec) from L-serine and tRNA(Sec): step 1/1. In terms of biological role, catalyzes the attachment of serine to tRNA(Ser). Is also able to aminoacylate tRNA(Sec) with serine, to form the misacylated tRNA L-seryl-tRNA(Sec), which will be further converted into selenocysteinyl-tRNA(Sec). In Leptospira interrogans serogroup Icterohaemorrhagiae serovar copenhageni (strain Fiocruz L1-130), this protein is Serine--tRNA ligase.